Reading from the N-terminus, the 319-residue chain is D-alanine--D-alanine ligase B (319 aa).

Residues 117–312 (KRVWLSLGLP…FQQLVLAILA (196 aa)) form the ATP-grasp domain. Residue 143–198 (AQRLGFPLIVKPAHEGSSIGMAKVGGLDELIAAWREAARYDSQVLVEQWISGPEFT) participates in ATP binding. The Mg(2+) site is built by aspartate 266, glutamate 279, and asparagine 281.

This sequence belongs to the D-alanine--D-alanine ligase family. Mg(2+) serves as cofactor. Mn(2+) is required as a cofactor.

The protein resides in the cytoplasm. The catalysed reaction is 2 D-alanine + ATP = D-alanyl-D-alanine + ADP + phosphate + H(+). The protein operates within cell wall biogenesis; peptidoglycan biosynthesis. Functionally, cell wall formation. This is D-alanine--D-alanine ligase B from Pseudomonas aeruginosa (strain ATCC 15692 / DSM 22644 / CIP 104116 / JCM 14847 / LMG 12228 / 1C / PRS 101 / PAO1).